A 237-amino-acid chain; its full sequence is Chalcone--flavanone isomerase 1 (237 aa).

3 residues coordinate substrate: T48, N113, and S190.

This sequence belongs to the chalcone isomerase family.

The enzyme catalyses a chalcone = a flavanone.. The protein operates within secondary metabolite biosynthesis; flavonoid biosynthesis. Functionally, catalyzes the intramolecular cyclization of bicyclic chalcones into tricyclic (S)-flavanones. Responsible for the isomerization of 4,2',4',6'-tetrahydroxychalcone (also termed chalcone) into naringenin. The protein is Chalcone--flavanone isomerase 1 (CHI1) of Fragaria ananassa (Strawberry).